The sequence spans 519 residues: MILNISVSLLIFLAFYGFSSDAKSLPCSEVKKEYGIVCRCNATYCDTIEPLGTVTSGKAVVYTTSRNGKRMNRSELKHTTSSTAKTKVYVNTTQSFQPVMGFGAAFTDAAGINMKMLPQTMQDQIIQQYFSDDGLGYVFGRVPMASTDFSTHEYSYDDVKFDFDLKNFNLTVEDLQYKIPFIKKAMTASGGKLKLFATPWSSPGWMKTSGRMVGAGELLGDQNGKYYQTWAQYFVKFFEAYHAQGIDFWSLTPQNEPTTGIDPLWKWQTLFFDASMERNFIKKLLGPALASSPVTKNLKIMINDDQRINLPHWPNVILTDPTAAQYVHGIAIHWYEDFIDPATVLTETHEKFPDYFLLATEACAGYFPADGPKLGSWSRAEQYANDLIKDMGNWVGGWVDWNYILDLQGGPNLAKNFVDSTIIVNATAQEYYKQPIWHVMAQFSKFVKPGAIRVGINIIEKSVDVEGLSFLNQDGTKTVVLLNKNEVLSFDVAISDVSAPNVIYDLTIQPNSLITIVYK.

The signal sequence occupies residues 1–24 (MILNISVSLLIFLAFYGFSSDAKS). Glu-256 acts as the Proton donor in catalysis. Glu-361 functions as the Nucleophile in the catalytic mechanism.

Belongs to the glycosyl hydrolase 30 family.

It catalyses the reaction a beta-D-glucosylceramide + H2O = an N-acyl-sphingoid base + D-glucose. The enzyme catalyses a beta-D-glucosyl-(1&lt;-&gt;1')-N-acylsphing-4-enine + H2O = an N-acylsphing-4-enine + D-glucose. It carries out the reaction an N-acyl-1-beta-D-glucosyl-15-methylhexadecasphing-4-enine + H2O = an N-acyl-15-methylhexadecasphing-4-enine + D-glucose. The protein operates within lipid metabolism; sphingolipid metabolism. Its function is as follows. Glucosylceramidase that catalyzes the hydrolysis of glucosylceramides into free ceramides and glucose. C.elegans contains specific sphingoid bases, which are unique or different in structure compared to the sphingoid bases found in other animals. Two examples of these distinctive compounds are: 15-methylhexadecasphinganine and 15-methylhexadecasphing-4-enine. The protein is Putative glucosylceramidase 4 (gba-4) of Caenorhabditis elegans.